The chain runs to 208 residues: Small ribosomal subunit protein eS8 (208 aa).

The interval 1–27 is disordered; it reads MGISRDNWHKRRRTGGKRKPVHKKRKY. A compositionally biased stretch (basic residues) spans 8 to 26; it reads WHKRRRTGGKRKPVHKKRK.

This sequence belongs to the eukaryotic ribosomal protein eS8 family. In terms of assembly, component of the small ribosomal subunit. Identified in a IGF2BP1-dependent mRNP granule complex containing untranslated mRNAs. Part of the small subunit (SSU) processome, composed of more than 70 proteins and the RNA chaperone small nucleolar RNA (snoRNA) U3.

It localises to the cytoplasm. The protein localises to the membrane. The protein resides in the nucleus. It is found in the nucleolus. In terms of biological role, component of the small ribosomal subunit. The ribosome is a large ribonucleoprotein complex responsible for the synthesis of proteins in the cell. Part of the small subunit (SSU) processome, first precursor of the small eukaryotic ribosomal subunit. During the assembly of the SSU processome in the nucleolus, many ribosome biogenesis factors, an RNA chaperone and ribosomal proteins associate with the nascent pre-rRNA and work in concert to generate RNA folding, modifications, rearrangements and cleavage as well as targeted degradation of pre-ribosomal RNA by the RNA exosome. The polypeptide is Small ribosomal subunit protein eS8 (rps8) (Danio rerio (Zebrafish)).